Reading from the N-terminus, the 467-residue chain is A-type ATP synthase subunit B (467 aa).

The disordered stretch occupies residues 95-114 (GKGQPRDHMPLPPPEDFRDV).

This sequence belongs to the ATPase alpha/beta chains family. As to quaternary structure, has multiple subunits with at least A(3), B(3), C, D, E, F, H, I and proteolipid K(x).

Its subcellular location is the cell membrane. Functionally, component of the A-type ATP synthase that produces ATP from ADP in the presence of a proton gradient across the membrane. The B chain is a regulatory subunit. The sequence is that of A-type ATP synthase subunit B from Pyrobaculum neutrophilum (strain DSM 2338 / JCM 9278 / NBRC 100436 / V24Sta) (Thermoproteus neutrophilus).